Here is a 427-residue protein sequence, read N- to C-terminus: Arginine biosynthesis bifunctional protein ArgJ (427 aa).

The substrate site is built by Thr-174, Lys-200, Thr-211, Glu-291, Asn-422, and Thr-427. The Nucleophile role is filled by Thr-211.

It belongs to the ArgJ family. In terms of assembly, heterotetramer of two alpha and two beta chains.

It is found in the cytoplasm. It carries out the reaction N(2)-acetyl-L-ornithine + L-glutamate = N-acetyl-L-glutamate + L-ornithine. The catalysed reaction is L-glutamate + acetyl-CoA = N-acetyl-L-glutamate + CoA + H(+). It functions in the pathway amino-acid biosynthesis; L-arginine biosynthesis; L-ornithine and N-acetyl-L-glutamate from L-glutamate and N(2)-acetyl-L-ornithine (cyclic): step 1/1. Its pathway is amino-acid biosynthesis; L-arginine biosynthesis; N(2)-acetyl-L-ornithine from L-glutamate: step 1/4. In terms of biological role, catalyzes two activities which are involved in the cyclic version of arginine biosynthesis: the synthesis of N-acetylglutamate from glutamate and acetyl-CoA as the acetyl donor, and of ornithine by transacetylation between N(2)-acetylornithine and glutamate. This chain is Arginine biosynthesis bifunctional protein ArgJ, found in Prochlorococcus marinus (strain MIT 9313).